A 280-amino-acid polypeptide reads, in one-letter code: Probable endonuclease 4 (280 aa).

Zn(2+) contacts are provided by histidine 69, histidine 109, glutamate 145, aspartate 179, histidine 182, histidine 216, aspartate 229, histidine 231, and glutamate 261.

This sequence belongs to the AP endonuclease 2 family. The cofactor is Zn(2+).

It catalyses the reaction Endonucleolytic cleavage to 5'-phosphooligonucleotide end-products.. Endonuclease IV plays a role in DNA repair. It cleaves phosphodiester bonds at apurinic or apyrimidinic (AP) sites, generating a 3'-hydroxyl group and a 5'-terminal sugar phosphate. The protein is Probable endonuclease 4 of Photorhabdus laumondii subsp. laumondii (strain DSM 15139 / CIP 105565 / TT01) (Photorhabdus luminescens subsp. laumondii).